Consider the following 391-residue polypeptide: Protein-glutamate methylesterase/protein-glutamine glutaminase of group 2 operon (391 aa).

A Response regulatory domain is found at 20 to 138; it reads RVMIVDDSVV…EPQAADIFKH (119 aa). Asp71 bears the 4-aspartylphosphate mark. One can recognise a CheB-type methylesterase domain in the interval 196 to 383; that stretch reads PTAPRVLLIG…PLNQIGPKVV (188 aa). Active-site residues include Ser207, His235, and Asp331.

It belongs to the CheB family. Post-translationally, phosphorylated by CheA. Phosphorylation of the N-terminal regulatory domain activates the methylesterase activity.

It localises to the cytoplasm. The enzyme catalyses [protein]-L-glutamate 5-O-methyl ester + H2O = L-glutamyl-[protein] + methanol + H(+). It catalyses the reaction L-glutaminyl-[protein] + H2O = L-glutamyl-[protein] + NH4(+). Involved in chemotaxis. Part of a chemotaxis signal transduction system that modulates chemotaxis in response to various stimuli. Catalyzes the demethylation of specific methylglutamate residues introduced into the chemoreceptors (methyl-accepting chemotaxis proteins or MCP) by CheR. Also mediates the irreversible deamidation of specific glutamine residues to glutamic acid. The protein is Protein-glutamate methylesterase/protein-glutamine glutaminase of group 2 operon of Rhodopseudomonas palustris (strain ATCC BAA-98 / CGA009).